We begin with the raw amino-acid sequence, 474 residues long: Adenosylhomocysteinase (474 aa).

Substrate is bound by residues threonine 61, aspartate 136, and glutamate 196. Position 197–199 (197–199) interacts with NAD(+); sequence TTT. Positions 226 and 230 each coordinate substrate. NAD(+) contacts are provided by residues asparagine 231, 260 to 265, glutamate 283, asparagine 318, 339 to 341, and asparagine 384; these read GYGDVG and IGH.

This sequence belongs to the adenosylhomocysteinase family. NAD(+) serves as cofactor.

Its subcellular location is the cytoplasm. The catalysed reaction is S-adenosyl-L-homocysteine + H2O = L-homocysteine + adenosine. It participates in amino-acid biosynthesis; L-homocysteine biosynthesis; L-homocysteine from S-adenosyl-L-homocysteine: step 1/1. In terms of biological role, may play a key role in the regulation of the intracellular concentration of adenosylhomocysteine. This Ralstonia pickettii (strain 12J) protein is Adenosylhomocysteinase.